The chain runs to 66 residues: Large ribosomal subunit protein bL33 (66 aa).

This sequence belongs to the bacterial ribosomal protein bL33 family.

This chain is Large ribosomal subunit protein bL33, found in Wolbachia pipientis subsp. Culex pipiens (strain wPip).